Reading from the N-terminus, the 295-residue chain is ER-localized J domain-containing protein 5 (295 aa).

The first 20 residues, 1–20 (MNGYWKPALVVLGLVSLSYA), serve as a signal peptide directing secretion. Residues 21–130 (FTTIETEIFQ…GFYFSRMKPK (110 aa)) are Lumenal-facing. Positions 42–110 (DMNFYKFLKL…RKIYDYYLQN (69 aa)) constitute a J domain. The helical transmembrane segment at 131–151 (TWFLLAFIWIVVNIGQYIISI) threads the bilayer. Residues 152–295 (IQYRSQRSRI…PNGKVIYSRK (144 aa)) lie on the Cytoplasmic side of the membrane. A disordered region spans residues 259–287 (KYDGNQTKKGNKVKKGSAKKGQKKMELPN). Positions 267–280 (KGNKVKKGSAKKGQ) are enriched in basic residues.

It belongs to the DnaJ family.

It localises to the endoplasmic reticulum membrane. Functionally, dnaJ-like chaperone required for the folding capacity of the endoplasmic reticulum. The polypeptide is ER-localized J domain-containing protein 5 (ERJ5) (Saccharomyces cerevisiae (strain ATCC 204508 / S288c) (Baker's yeast)).